Consider the following 152-residue polypeptide: Protein X (152 aa).

The mitochondrial targeting sequence stretch occupies residues 68–115 (PCALRFTSATWRCMETPMNSVTCLRKRTLGLRTAPPTVMEQYIKDCLF).

It belongs to the orthohepadnavirus protein X family. As to quaternary structure, may form homodimer. May interact with host CEBPA, CFLAR, CREB1, DDB1, E4F1, HBXIP, HSPD1/HSP60, NFKBIA, POLR2E and SMAD4. Interacts with host SMC5-SMC6 complex and induces its degradation. Interacts with host TRPC4AP; leading to prevent ubiquitination of TRPC4AP. Interacts with host PLSCR1; this interaction promotes ubiquitination and degradation of HBx and impairs HBx-mediated cell proliferation. Post-translationally, a fraction may be phosphorylated in insect cells and HepG2 cells, a human hepatoblastoma cell line. Phosphorylated in vitro by host protein kinase C or mitogen-activated protein kinase. N-acetylated in insect cells.

The protein localises to the host cytoplasm. It is found in the host nucleus. It localises to the host mitochondrion. Its function is as follows. Multifunctional protein that plays a role in silencing host antiviral defenses and promoting viral transcription. Does not seem to be essential for HBV infection. May be directly involved in development of cirrhosis and liver cancer (hepatocellular carcinoma). Most of cytosolic activities involve modulation of cytosolic calcium. The effect on apoptosis is controversial depending on the cell types in which the studies have been conducted. May induce apoptosis by localizing in mitochondria and causing loss of mitochondrial membrane potential. May also modulate apoptosis by binding host CFLAR, a key regulator of the death-inducing signaling complex (DISC). Promotes viral transcription by using the host E3 ubiquitin ligase DDB1 to target the SMC5-SMC6 complex to proteasomal degradation. This host complex would otherwise bind to viral episomal DNA, and prevents its transcription. Moderately stimulates transcription of many different viral and cellular transcription elements. Promoters and enhancers stimulated by HBx contain DNA binding sites for NF-kappa-B, AP-1, AP-2, c-EBP, ATF/CREB, or the calcium-activated factor NF-AT. This is Protein X from Lagothrix lagotricha (Brown woolly monkey).